Reading from the N-terminus, the 500-residue chain is Lysine--tRNA ligase (500 aa).

Residues Glu407 and Glu414 each coordinate Mg(2+).

This sequence belongs to the class-II aminoacyl-tRNA synthetase family. As to quaternary structure, homodimer. It depends on Mg(2+) as a cofactor.

The protein localises to the cytoplasm. The catalysed reaction is tRNA(Lys) + L-lysine + ATP = L-lysyl-tRNA(Lys) + AMP + diphosphate. This is Lysine--tRNA ligase from Azobacteroides pseudotrichonymphae genomovar. CFP2.